We begin with the raw amino-acid sequence, 616 residues long: Elongation factor 4 (616 aa).

A tr-type G domain is found at 14–195 (SRIRNFCIIA…EVIRQVPPPV (182 aa)). Residues 26-31 (DHGKST) and 142-145 (NKID) each bind GTP.

This sequence belongs to the TRAFAC class translation factor GTPase superfamily. Classic translation factor GTPase family. LepA subfamily.

Its subcellular location is the cell membrane. The catalysed reaction is GTP + H2O = GDP + phosphate + H(+). Required for accurate and efficient protein synthesis under certain stress conditions. May act as a fidelity factor of the translation reaction, by catalyzing a one-codon backward translocation of tRNAs on improperly translocated ribosomes. Back-translocation proceeds from a post-translocation (POST) complex to a pre-translocation (PRE) complex, thus giving elongation factor G a second chance to translocate the tRNAs correctly. Binds to ribosomes in a GTP-dependent manner. This is Elongation factor 4 from Nocardia farcinica (strain IFM 10152).